Here is a 95-residue protein sequence, read N- to C-terminus: Small ribosomal subunit protein bS6 (95 aa).

It belongs to the bacterial ribosomal protein bS6 family.

Its function is as follows. Binds together with bS18 to 16S ribosomal RNA. The chain is Small ribosomal subunit protein bS6 (rpsF) from Halalkalibacterium halodurans (strain ATCC BAA-125 / DSM 18197 / FERM 7344 / JCM 9153 / C-125) (Bacillus halodurans).